A 55-amino-acid chain; its full sequence is Small ribosomal subunit protein uS14 (55 aa).

The disordered stretch occupies residues 1–20 (MSFEPSGPHSHRKPFGKGSR). Positions 22, 25, 38, and 41 each coordinate Zn(2+).

It belongs to the universal ribosomal protein uS14 family. Zn(2+) is required as a cofactor.

The sequence is that of Small ribosomal subunit protein uS14 (RPS29) from Encephalitozoon cuniculi (strain GB-M1) (Microsporidian parasite).